A 248-amino-acid chain; its full sequence is Ras-like protein family member 11B (248 aa).

The segment at alanine 30–valine 248 is small GTPase-like. GTP is bound by residues glycine 41–threonine 48, aspartate 88–leucine 99, and asparagine 153–aspartate 156. The tract at residues glutamine 206–glutamine 228 is disordered.

It belongs to the small GTPase superfamily. Ras family.

The catalysed reaction is GTP + H2O = GDP + phosphate + H(+). The protein is Ras-like protein family member 11B of Xenopus laevis (African clawed frog).